Here is a 484-residue protein sequence, read N- to C-terminus: Dynein regulatory complex subunit 2 (484 aa).

2 coiled-coil regions span residues 92–160 (VDCK…RKTI) and 374–403 (KEQEGIEENNLEELTEELAKVMVDYTGMEN).

It belongs to the DRC2 family. As to quaternary structure, component of the nexin-dynein regulatory complex (N-DRC). Interacts with DRC1.

It localises to the cytoplasm. The protein resides in the cytoskeleton. Its subcellular location is the flagellum basal body. It is found in the cell projection. The protein localises to the cilium. It localises to the flagellum. The protein resides in the flagellum axoneme. Its function is as follows. Component of the nexin-dynein regulatory complex (N-DRC), a key regulator of ciliary/flagellar motility which maintains the alignment and integrity of the distal axoneme and regulates microtubule sliding in motile axonemes. Plays a critical role in the assembly of N-DRC and also stabilizes the assembly of multiple inner dynein arms and radial spokes. Coassembles with DRC1 to form a central scaffold needed for assembly of the N-DRC and its attachment to the outer doublet microtubules. In Macaca fascicularis (Crab-eating macaque), this protein is Dynein regulatory complex subunit 2 (CCDC65).